The primary structure comprises 345 residues: Transcription factor STKL1 (345 aa).

Positions 1–145 are disordered; that stretch reads MASLENPAID…KKGHAQRVWS (145 aa). Residues 11–22 are compositionally biased toward low complexity; that stretch reads SSSEFESSSEEI. Residues 23–32 are compositionally biased toward basic and acidic residues; sequence SSSKESKPKE. A compositionally biased stretch (polar residues) spans 37 to 46; that stretch reads VPSTKTLNSP. Ser-105 is modified (phosphoserine). Basic and acidic residues predominate over residues 114–137; sequence RASEGTTSRDMHVKRIKKEGDNKK.

The protein belongs to the GeBP family. As to expression, expressed strongly in leaves and flowers, weakly in roots, and very weakly in stems.

The protein resides in the nucleus. Its function is as follows. Transcription repressor that binds DNA in a sequence-specific manner, 5'-GCCT-3', to regulate the expression of PGR. Acts as a modulatory component for the glucose-triggered developmental leaf growth process. This chain is Transcription factor STKL1, found in Arabidopsis thaliana (Mouse-ear cress).